The primary structure comprises 654 residues: MEKSATRQKALLIALPLLFSPLASAVQQAVLDTRGAPLITVNGLTFKDLNRDGKLNPYEDWRLPAAERAADLVSRMTLAEKAGVMMHGSAPTAGSVTGAGTQYDLNAAKTMIADRYVNSFITRLSGDNPAQMAEENNKLQQLAEATRLGIPLTISTDPRSSFQSLVGVSVSVGKFSKWPETLGLAAIGDEELVRRFADIVRQEYRAVGITEALSPQADLATEPRWPRIDGTFGEDPDLTKKMVRGYVTGMQNGKNGLNAQSVISIVKHWVGYGAAKDGWDSHNVYGKYAQFRQNNLQWHIDPFTGAFEAHAAGIMPTYSILRNASWHGKPIEQVGAGFNRFLLTDLLRGQYGFDGVILSDWLITNDCKGDCLTGVKPGEKPVPRGMPWGVEKLTPAERFVKAVNAGVDQFGGVTDSALLVQAVQDGKLTEARLDTSVNRILKQKFQTGLFERPYVNATQANDIVGRADWQQLADDTQARSLVLLQNNNLLPLRKGSRVWLHGIAANAAQEVGFIVVNTPEQADVALIRTHTPYEQPHKNFFFGSRHHEGSLAFRNDNPDYQAIVRASAKVPTLVTVYMERPAILTNVVDKTRAVVANFGVSDSVLLNRLMSGAAYTAKLPFELPSSMSAVRNQQPDLPYDSAKPLFPFGYGLPH.

An N-terminal signal peptide occupies residues 1–25 (MEKSATRQKALLIALPLLFSPLASA). Catalysis depends on residues Asp-235 and Asp-360.

This sequence belongs to the glycosyl hydrolase 3 family.

It is found in the periplasm. The enzyme catalyses Hydrolysis of terminal, non-reducing beta-D-glucosyl residues with release of beta-D-glucose.. It carries out the reaction Hydrolysis of (1-&gt;4)-beta-D-xylans, to remove successive D-xylose residues from the non-reducing termini.. Functionally, exhibits both beta-glucosidase and beta-xylosidase activities. This Dickeya chrysanthemi (Pectobacterium chrysanthemi) protein is Periplasmic beta-glucosidase/beta-xylosidase (bgxA).